The following is an 804-amino-acid chain: Lon protease 2 (804 aa).

The 198-residue stretch at 19–216 folds into the Lon N-terminal domain; the sequence is VPILPLRNSV…LVLAMVGRQL (198 aa). An ATP-binding site is contributed by 367-374; the sequence is GPPGVGKT. One can recognise a Lon proteolytic domain in the interval 603–784; sequence TLQPGVATGL…EEILPLVLEP (182 aa). Residues S690 and K733 contribute to the active site. The tract at residues 782–804 is disordered; it reads LEPPRRAPAQSASPEELEEQAGV.

The protein belongs to the peptidase S16 family. Homohexamer. Organized in a ring with a central cavity.

The protein localises to the cytoplasm. It carries out the reaction Hydrolysis of proteins in presence of ATP.. ATP-dependent serine protease that mediates the selective degradation of mutant and abnormal proteins as well as certain short-lived regulatory proteins. Required for cellular homeostasis and for survival from DNA damage and developmental changes induced by stress. Degrades polypeptides processively to yield small peptide fragments that are 5 to 10 amino acids long. Binds to DNA in a double-stranded, site-specific manner. This chain is Lon protease 2, found in Sorangium cellulosum (strain So ce56) (Polyangium cellulosum (strain So ce56)).